The following is a 112-amino-acid chain: Notch-regulated ankyrin repeat-containing protein A (112 aa).

2 ANK repeats span residues 48 to 77 and 81 to 110; these read EGQT…DIRL and EGWS…YSSG.

Belongs to the NRARP family.

Its function is as follows. Regulates independently canonical Wnt and Notch signaling by modulating LEF1 and Notch protein turnover. Stabilizes LEF1, a pivotal transcription factor in the Wnt signaling cascade, by blocking its ubiquitination. Involved in angiogenesis; involved in intersegmental vessel patterning during development. This chain is Notch-regulated ankyrin repeat-containing protein A (nrarpa), found in Danio rerio (Zebrafish).